We begin with the raw amino-acid sequence, 180 residues long: Translation initiation factor IF-3 (180 aa).

It belongs to the IF-3 family. In terms of assembly, monomer.

It is found in the cytoplasm. Its function is as follows. IF-3 binds to the 30S ribosomal subunit and shifts the equilibrium between 70S ribosomes and their 50S and 30S subunits in favor of the free subunits, thus enhancing the availability of 30S subunits on which protein synthesis initiation begins. This chain is Translation initiation factor IF-3, found in Salmonella typhi.